We begin with the raw amino-acid sequence, 215 residues long: Ribonuclease T (215 aa).

The region spanning 20-194 is the Exonuclease domain; that stretch reads VVIDVETAGF…YDTERTAVLF (175 aa). Mg(2+) is bound by residues Asp-23, Glu-25, His-181, and Asp-186. His-181 functions as the Proton donor/acceptor in the catalytic mechanism.

The protein belongs to the RNase T family. In terms of assembly, homodimer. It depends on Mg(2+) as a cofactor.

Its function is as follows. Trims short 3' overhangs of a variety of RNA species, leaving a one or two nucleotide 3' overhang. Responsible for the end-turnover of tRNA: specifically removes the terminal AMP residue from uncharged tRNA (tRNA-C-C-A). Also appears to be involved in tRNA biosynthesis, especially in strains lacking other exoribonucleases. Functionally, a general regulator of small RNAs (sRNA), contributes to their degradation. Upon overexpression suppresses sRNA-mediated RhyB-silencing of multiple RNA targets; overexpression leads to nearly complete loss of RhyB sRNA. This chain is Ribonuclease T, found in Escherichia coli (strain K12).